The primary structure comprises 87 residues: Small ribosomal subunit protein bS20 (87 aa).

Residues 1-22 form a disordered region; it reads MANSAQARKRARQSLKARAHNA. Basic residues predominate over residues 7-19; the sequence is ARKRARQSLKARA.

Belongs to the bacterial ribosomal protein bS20 family.

Its function is as follows. Binds directly to 16S ribosomal RNA. This chain is Small ribosomal subunit protein bS20, found in Laribacter hongkongensis (strain HLHK9).